A 530-amino-acid chain; its full sequence is Glucocorticoid modulatory element-binding protein 2 (530 aa).

The SAND domain occupies 81–163; sequence EEGENLEAEI…RKIMDSGELD (83 aa). A Zn(2+)-binding site is contributed by cysteine 110. Residues lysine 136, lysine 140, lysine 143, and arginine 154 each contribute to the DNA site. Lysine 155 is covalently cross-linked (Glycyl lysine isopeptide (Lys-Gly) (interchain with G-Cter in SUMO1); alternate). Lysine 155 is covalently cross-linked (Glycyl lysine isopeptide (Lys-Gly) (interchain with G-Cter in SUMO2); alternate). Positions 167, 171, and 175 each coordinate Zn(2+). Coiled-coil stretches lie at residues 245-270 and 304-344; these read LLDE…RVQD and QMDR…SNVL. A Phosphoserine modification is found at serine 373.

As to quaternary structure, homodimer, and heterodimer of GMEB1 and GMEB2. Interacts with the glucocorticoid receptor (NR3C1). May interact with CREB-binding protein (CBP).

It is found in the nucleus. The protein resides in the cytoplasm. In terms of biological role, trans-acting factor that binds to glucocorticoid modulatory elements (GME) present in the TAT (tyrosine aminotransferase) promoter and increases sensitivity to low concentrations of glucocorticoids. Also binds to the transferrin receptor promoter. In Mus musculus (Mouse), this protein is Glucocorticoid modulatory element-binding protein 2 (Gmeb2).